Here is a 212-residue protein sequence, read N- to C-terminus: Golgi SNAP receptor complex member 2 homolog memb-1 (212 aa).

The Cytoplasmic portion of the chain corresponds to 1 to 189 (MEAQYQSTNF…QVIDRRVRED (189 aa)). The chain crosses the membrane as a helical; Anchor for type IV membrane protein span at residues 190–210 (WIFVIGCIVCCIFMYAFYRFW). Residues 211 to 212 (RG) lie on the Vesicular side of the membrane.

The protein belongs to the GOSR2 family. Part of a unique SNARE complex.

It is found in the golgi apparatus. The protein resides in the cis-Golgi network membrane. Its subcellular location is the golgi apparatus membrane. It localises to the endoplasmic reticulum membrane. Its function is as follows. Involved in transport of proteins from the cis/medial-Golgi to the trans-Golgi network. The protein is Golgi SNAP receptor complex member 2 homolog memb-1 of Caenorhabditis briggsae.